Here is a 157-residue protein sequence, read N- to C-terminus: Protein Smg (157 aa).

This sequence belongs to the Smg family.

This Pectobacterium atrosepticum (strain SCRI 1043 / ATCC BAA-672) (Erwinia carotovora subsp. atroseptica) protein is Protein Smg.